The primary structure comprises 185 residues: Elongation factor P (185 aa).

The protein belongs to the elongation factor P family.

The protein resides in the cytoplasm. The protein operates within protein biosynthesis; polypeptide chain elongation. Functionally, involved in peptide bond synthesis. Stimulates efficient translation and peptide-bond synthesis on native or reconstituted 70S ribosomes in vitro. Probably functions indirectly by altering the affinity of the ribosome for aminoacyl-tRNA, thus increasing their reactivity as acceptors for peptidyl transferase. The chain is Elongation factor P from Bacillus cereus (strain G9842).